The following is a 103-amino-acid chain: Cell division topological specificity factor (103 aa).

It belongs to the MinE family.

In terms of biological role, prevents the cell division inhibition by proteins MinC and MinD at internal division sites while permitting inhibition at polar sites. This ensures cell division at the proper site by restricting the formation of a division septum at the midpoint of the long axis of the cell. The chain is Cell division topological specificity factor from Prochlorococcus marinus (strain MIT 9211).